The primary structure comprises 200 residues: Imidazoleglycerol-phosphate dehydratase (200 aa).

This sequence belongs to the imidazoleglycerol-phosphate dehydratase family.

It is found in the cytoplasm. It catalyses the reaction D-erythro-1-(imidazol-4-yl)glycerol 3-phosphate = 3-(imidazol-4-yl)-2-oxopropyl phosphate + H2O. It functions in the pathway amino-acid biosynthesis; L-histidine biosynthesis; L-histidine from 5-phospho-alpha-D-ribose 1-diphosphate: step 6/9. The sequence is that of Imidazoleglycerol-phosphate dehydratase from Chlorobium luteolum (strain DSM 273 / BCRC 81028 / 2530) (Pelodictyon luteolum).